The following is a 509-amino-acid chain: ATP synthase subunit alpha (509 aa).

An ATP-binding site is contributed by 169 to 176; sequence GDRQTGKT.

The protein belongs to the ATPase alpha/beta chains family. As to quaternary structure, F-type ATPases have 2 components, CF(1) - the catalytic core - and CF(0) - the membrane proton channel. CF(1) has five subunits: alpha(3), beta(3), gamma(1), delta(1), epsilon(1). CF(0) has three main subunits: a(1), b(2) and c(9-12). The alpha and beta chains form an alternating ring which encloses part of the gamma chain. CF(1) is attached to CF(0) by a central stalk formed by the gamma and epsilon chains, while a peripheral stalk is formed by the delta and b chains.

The protein localises to the cell inner membrane. It carries out the reaction ATP + H2O + 4 H(+)(in) = ADP + phosphate + 5 H(+)(out). Its function is as follows. Produces ATP from ADP in the presence of a proton gradient across the membrane. The alpha chain is a regulatory subunit. In Bradyrhizobium diazoefficiens (strain JCM 10833 / BCRC 13528 / IAM 13628 / NBRC 14792 / USDA 110), this protein is ATP synthase subunit alpha.